The sequence spans 182 residues: Mesencephalic astrocyte-derived neurotrophic factor (182 aa).

The N-terminal stretch at 1 to 24 (MRRMWATQGLAVALALSVLPGSRA) is a signal peptide. Disulfide bonds link C30–C117, C33–C106, C64–C75, and C151–C154. Y76 bears the Phosphotyrosine mark. An interacts with ERN1, EIF2AK3 and ATF6 region spans residues 96–158 (LAHHIPVEKI…ETCKGCAEKS (63 aa)). The segment at 129–172 (TVDLKKLRVKELKKILDDWGETCKGCAEKSDYIRKINELMPKYA) is interacts with HSPA5.

It belongs to the ARMET family. As to quaternary structure, interacts directly (via SAP domain) with HSPA5/BiP; the interaction inhibits ATP binding to HSPA5/BiP and subsequent nucleotide exchange. Component of a complex containing at least CRELD2, MANF, MATN3 and PDIA4. Interacts (via C-terminus) with ERN1 (via luminal domain); the interaction is decreased in the presence of increasing concentrations of Ca(2+). May contain sialic acid residues.

It is found in the secreted. It localises to the endoplasmic reticulum lumen. Its subcellular location is the sarcoplasmic reticulum lumen. In terms of biological role, selectively promotes the survival of dopaminergic neurons of the ventral mid-brain. Modulates GABAergic transmission to the dopaminergic neurons of the substantia nigra. Enhances spontaneous, as well as evoked, GABAergic inhibitory postsynaptic currents in dopaminergic neurons. Inhibits cell proliferation and endoplasmic reticulum (ER) stress-induced cell death. Retained in the ER/sarcoplasmic reticulum (SR) through association with the endoplasmic reticulum chaperone protein HSPA5 under normal conditions. Stabilizes HSPA5/BiP in its substrate-bound ADP state, which facilitates HSPA5/BiP incorporation into chaperone-client complexes during endoplasmic reticulum stress, its interaction with HSPA5/BiP inhibits ATP binding to HSPA5/BiP and subsequent nucleotide exchange. As a result acts as a repressor of the unfolded protein response (UPR) pathway. Up-regulated and secreted by the ER/SR in response to ER stress and hypoxia. Following secretion by the ER/SR, directly binds to 3-O-sulfogalactosylceramide, a lipid sulfatide in the outer cell membrane of target cells. Sulfatide binding promotes its cellular uptake by endocytosis, and is required for its role in alleviating ER stress and cell toxicity under hypoxic and ER stress conditions. Essential for embryonic lung development. Required for the correct postnatal temporal and structural development of splenic white pulp. Required for the repair-associated myeloid response in skeletal muscle, acts as a regulator of phenotypic transition towards prorepair macrophages in response to muscle injury and as a result limits excessive proinflammatory signaling. Represses RELA expression and therefore NF-kB signaling in the myocardium, as a result limits macrophage infiltration of injured tissue and M1 macrophage differentiation in response to myocardial injury. Required for endochondral ossification in long bones and the skull during postnatal development. This Homo sapiens (Human) protein is Mesencephalic astrocyte-derived neurotrophic factor.